The primary structure comprises 232 residues: Thrombin-like enzyme bothrombin (232 aa).

A Peptidase S1 domain is found at valine 1–alanine 223. 6 disulfides stabilise this stretch: cysteine 7–cysteine 139, cysteine 26–cysteine 42, cysteine 74–cysteine 230, cysteine 118–cysteine 184, cysteine 150–cysteine 163, and cysteine 174–cysteine 199. Residues histidine 41 and aspartate 86 each act as charge relay system in the active site. Asparagine 98 and asparagine 146 each carry an N-linked (GlcNAc...) asparagine glycan. Catalysis depends on serine 178, which acts as the Charge relay system. A glycan (N-linked (GlcNAc...) asparagine) is linked at asparagine 225.

Belongs to the peptidase S1 family. Snake venom subfamily. In terms of assembly, monomer. Expressed by the venom gland.

Its subcellular location is the secreted. The catalysed reaction is Selective cleavage of Arg-|-Xaa bond in fibrinogen, to form fibrin, and release fibrinopeptide A. The specificity of further degradation of fibrinogen varies with species origin of the enzyme.. With respect to regulation, inhibited by diisopropylfluorophosphate (DFP), but not by hirudin. Functionally, thrombin-like snake venom serine protease that clots fibrinogen by releasing fibrinopeptide A from the alpha chain of fibrinogen (FGA), induces platelet aggregation through its interaction with GPIb (GP1BA/GP1BB), and activates factor VIII (F8). This Bothrops jararaca (Jararaca) protein is Thrombin-like enzyme bothrombin.